A 461-amino-acid chain; its full sequence is MLEIIKRLEYYAKVQPQSIALQIDDEIVNYENLYQKICDCTLNSPKFKLGCRVALLNDSPIVNITNYFVVLMMDGVPCFLDNKWSRDTIDKLIEHFHIEYVMTAIGKFKRTTSFGTYEKYISEQLKVDDLLHIGFTSGTTGLPKAYYRNEPSWIASYVENEKLIYNYEKALAAPGPLAHSLSLYTCIYALYSGRTFIGQRQFDAKRFISILNEQHSNIALFLVPTMLHQLLNVDTTITHIKSIFCSGAKLSESLFKTVSQQFKNANIIEFFGTSEASFITYNFNQTSPTNSVGQVFPNVSIKLEAQDNRKIGLLKVQSNMIYSGYVDVGVVQPHSWIETGDYAYIQNNQLYLVSRKSDRLIIGGKNIYPNVIEQQVKSLDGIEEAVVVGEPHRRFGEIAVLIYVGNQELDYTTLRRYLRQTLSRYEIPSKLVRVKDLPFTNSGKVARNTVQTLYLEGAFKV.

This sequence belongs to the ATP-dependent AMP-binding enzyme family.

This is Putative long chain fatty acid-CoA ligase VraA (vraA) from Staphylococcus haemolyticus (strain JCSC1435).